The chain runs to 372 residues: Ligninase H2 (372 aa).

A signal peptide spans 1–21 (MAFKQLLAALSVALTLQVTQA). Positions 22–28 (APNLDKR) are excised as a propeptide. 4 disulfides stabilise this stretch: cysteine 31–cysteine 44, cysteine 43–cysteine 314, cysteine 63–cysteine 149, and cysteine 278–cysteine 344. Histidine 76 acts as the Proton acceptor in catalysis. Residues aspartate 77, glycine 95, aspartate 97, and serine 99 each contribute to the Ca(2+) site. Histidine 205 is a binding site for heme b. Residues serine 206, aspartate 223, threonine 225, glutamine 228, and aspartate 230 each contribute to the Ca(2+) site. N-linked (GlcNAc...) asparagine glycosylation is present at asparagine 286.

It belongs to the peroxidase family. Ligninase subfamily. Heme b serves as cofactor. Ca(2+) is required as a cofactor.

The enzyme catalyses 1-(3,4-dimethoxyphenyl)-2-(2-methoxyphenoxy)propane-1,3-diol + H2O2 = 3,4-dimethoxybenzaldehyde + guaiacol + glycolaldehyde + H2O. The catalysed reaction is 2 (3,4-dimethoxyphenyl)methanol + H2O2 = 2 (3,4-dimethoxyphenyl)methanol radical + 2 H2O. Its pathway is secondary metabolite metabolism; lignin degradation. Functionally, depolymerization of lignin. Catalyzes the C(alpha)-C(beta) cleavage of the propyl side chains of lignin. The sequence is that of Ligninase H2 (GLG4) from Phanerodontia chrysosporium (White-rot fungus).